We begin with the raw amino-acid sequence, 460 residues long: UDP-N-acetylmuramoylalanine--D-glutamate ligase (460 aa).

115-121 (GTDGKTT) is a binding site for ATP.

The protein belongs to the MurCDEF family.

It is found in the cytoplasm. The catalysed reaction is UDP-N-acetyl-alpha-D-muramoyl-L-alanine + D-glutamate + ATP = UDP-N-acetyl-alpha-D-muramoyl-L-alanyl-D-glutamate + ADP + phosphate + H(+). The protein operates within cell wall biogenesis; peptidoglycan biosynthesis. Functionally, cell wall formation. Catalyzes the addition of glutamate to the nucleotide precursor UDP-N-acetylmuramoyl-L-alanine (UMA). The chain is UDP-N-acetylmuramoylalanine--D-glutamate ligase from Chlorobium luteolum (strain DSM 273 / BCRC 81028 / 2530) (Pelodictyon luteolum).